Here is a 386-residue protein sequence, read N- to C-terminus: MNSLDAFAAAKLADLEERGLRRTLRENWREDGLWISVDGQKLLSFSCNDYLNLTHHPALKAAAIRAIETYGVGAGASRLVTGNHPLLEKLEARLAALKGSEAACIFGAGYLANTGIIPTLVGKDDLILIDELAHACLFAGTQLSPATVRIFRHNDIAEVESLLATNRAHYRHALLLTDGVFSMDGDLAPLPALAEICTHHDCWLMADDAHGLGVIGQGRGSRHAFDPAPVIPLQMGTLSKAIGGYGGYLCASKPVIDLMKTRARTVVYSTGLPPALAASALAALDLIESDSDLVKKPLANARLFTTRLGLSPAQSPIVPIILGTVEAVMSAAQTLFTQGFLVTPIRPPTVPEGTARLRFAFTAGHAAEDILHLADVVAPLMPAKAR.

The substrate site is built by Arg-22 and Arg-29. 109 to 110 (GY) serves as a coordination point for pyridoxal 5'-phosphate. His-134 is a substrate binding site. Pyridoxal 5'-phosphate is bound by residues Ser-182, 207–210 (DDAH), and 237–240 (TLSK). Lys-240 bears the N6-(pyridoxal phosphate)lysine mark. A substrate-binding site is contributed by Thr-349.

The protein belongs to the class-II pyridoxal-phosphate-dependent aminotransferase family. BioF subfamily. Homodimer. It depends on pyridoxal 5'-phosphate as a cofactor.

It carries out the reaction 6-carboxyhexanoyl-[ACP] + L-alanine + H(+) = (8S)-8-amino-7-oxononanoate + holo-[ACP] + CO2. It functions in the pathway cofactor biosynthesis; biotin biosynthesis. Functionally, catalyzes the decarboxylative condensation of pimeloyl-[acyl-carrier protein] and L-alanine to produce 8-amino-7-oxononanoate (AON), [acyl-carrier protein], and carbon dioxide. The polypeptide is 8-amino-7-oxononanoate synthase (Beijerinckia indica subsp. indica (strain ATCC 9039 / DSM 1715 / NCIMB 8712)).